The sequence spans 280 residues: Elongation factor Ts (280 aa).

The involved in Mg(2+) ion dislocation from EF-Tu stretch occupies residues 82-85; that stretch reads TDFV.

The protein belongs to the EF-Ts family.

The protein resides in the cytoplasm. Functionally, associates with the EF-Tu.GDP complex and induces the exchange of GDP to GTP. It remains bound to the aminoacyl-tRNA.EF-Tu.GTP complex up to the GTP hydrolysis stage on the ribosome. This Baumannia cicadellinicola subsp. Homalodisca coagulata protein is Elongation factor Ts.